We begin with the raw amino-acid sequence, 296 residues long: GTPase Era (296 aa).

One can recognise an Era-type G domain in the interval 3 to 170 (KSGFVTIVGR…KELMFKYIPE (168 aa)). The G1 stretch occupies residues 11–18 (GRPNVGKS). Residue 11–18 (GRPNVGKS) coordinates GTP. The interval 37-41 (QTTRN) is G2. The tract at residues 58-61 (DTPG) is G3. GTP contacts are provided by residues 58–62 (DTPGI) and 120–123 (NKID). The segment at 120–123 (NKID) is G4. Residues 149-151 (ISA) form a G5 region. The region spanning 201–278 (LSEEVPHGIA…YIRLWVKVKE (78 aa)) is the KH type-2 domain.

It belongs to the TRAFAC class TrmE-Era-EngA-EngB-Septin-like GTPase superfamily. Era GTPase family. As to quaternary structure, monomer.

It localises to the cytoplasm. Its subcellular location is the cell membrane. Functionally, an essential GTPase that binds both GDP and GTP, with rapid nucleotide exchange. Plays a role in 16S rRNA processing and 30S ribosomal subunit biogenesis and possibly also in cell cycle regulation and energy metabolism. This Clostridium botulinum (strain Okra / Type B1) protein is GTPase Era.